A 35-amino-acid polypeptide reads, in one-letter code: Cecropin (35 aa).

An Isoleucine amide modification is found at I35.

This sequence belongs to the cecropin family.

It is found in the secreted. Cecropins have lytic and antibacterial activity against several Gram-positive and Gram-negative bacteria. The polypeptide is Cecropin (Bombyx mori (Silk moth)).